Reading from the N-terminus, the 281-residue chain is Sulfur carrier protein FdhD (281 aa).

Cys-117 serves as the catalytic Cysteine persulfide intermediate.

Belongs to the FdhD family.

The protein localises to the cytoplasm. In terms of biological role, required for formate dehydrogenase (FDH) activity. Acts as a sulfur carrier protein that transfers sulfur from IscS to the molybdenum cofactor prior to its insertion into FDH. In Xanthomonas euvesicatoria pv. vesicatoria (strain 85-10) (Xanthomonas campestris pv. vesicatoria), this protein is Sulfur carrier protein FdhD.